The following is a 108-amino-acid chain: Peptidyl-prolyl cis-trans isomerase Fkbp12 (108 aa).

The segment at 1–21 is disordered; the sequence is MGVQVVPIAPGDGSTYPKNGQ. The 89-residue stretch at 20–108 folds into the PPIase FKBP-type domain; sequence GQKVTVHYTG…TFDVELLKVE (89 aa).

Belongs to the FKBP-type PPIase family. FKBP1 subfamily.

It is found in the cytoplasm. It catalyses the reaction [protein]-peptidylproline (omega=180) = [protein]-peptidylproline (omega=0). Functionally, PPIases accelerate the folding of proteins. It catalyzes the cis-trans isomerization of proline imidic peptide bonds in oligopeptides. Binds to ligand-free TGF beta type I receptor, from which it is released upon a ligand-induced, type II receptor mediated phosphorylation of the type I receptor. Binding is inhibitory to the signaling pathways of the TGF beta family ligands. This Drosophila melanogaster (Fruit fly) protein is Peptidyl-prolyl cis-trans isomerase Fkbp12.